We begin with the raw amino-acid sequence, 186 residues long: ATP-dependent protease subunit HslV (186 aa).

Threonine 14 is a catalytic residue. Positions 168, 171, and 174 each coordinate Na(+).

This sequence belongs to the peptidase T1B family. HslV subfamily. In terms of assembly, a double ring-shaped homohexamer of HslV is capped on each side by a ring-shaped HslU homohexamer. The assembly of the HslU/HslV complex is dependent on binding of ATP.

It localises to the cytoplasm. The catalysed reaction is ATP-dependent cleavage of peptide bonds with broad specificity.. Allosterically activated by HslU binding. Protease subunit of a proteasome-like degradation complex believed to be a general protein degrading machinery. The chain is ATP-dependent protease subunit HslV from Methylorubrum extorquens (strain CM4 / NCIMB 13688) (Methylobacterium extorquens).